The chain runs to 497 residues: MVEELKNDAQTNEEESEYSDFSDGSDNDYFREDDIDWNQASSNYSARQENFGNNSSKINSVNDHVSTLSRYVNNIKLNDRFEAEDKSSIKDKSDRATSEQVLDPRTRMILLKLINNGTISEINGCISTGKEANVYHATNEDGKHFAIKIYKTSILVFKDRDRYVSGEFRFRHGYNKRNPRKMVRLWAEKEIRNLKRVAAAGIPCPEPILLKQHVLLMSFLGDKKGWAYPKLKDIDMTPGEATKLYQLVARNMRILFHVCHLVHADLSEYNLLYHKGKVYFIDVSQSVEHDHPQSIDFLRMDILNISTFFRRLNAGCLSLPQLFKFITEEGSCEKEAMKTRLNAIYEEEPTTEEYEEEFLKTYVPRTLDEVYDIDRDTEIVNAGGVNSLVYKHLLNTDFQKLDLNDTTKNQNDQILPNETSESDDDANSISSMENEEERTSDSKSSAKQGKGNGRAKETPEEKRARKKKTKEDKAEKRKSKIPKYEKKRKLKQSGRKK.

The segment at 1-35 (MVEELKNDAQTNEEESEYSDFSDGSDNDYFREDDI) is disordered. Acidic residues predominate over residues 11 to 35 (TNEEESEYSDFSDGSDNDYFREDDI). A Protein kinase domain is found at 120-415 (SEINGCISTG…TTKNQNDQIL (296 aa)). ATP is bound by residues lysine 148 and leucine 220. Aspartate 265 (proton acceptor) is an active-site residue. Residues asparagine 270 and aspartate 282 each contribute to the Mg(2+) site. Aspartate 282 serves as the catalytic 4-aspartylphosphate intermediate. Positions 407–419 (TKNQNDQILPNET) are enriched in polar residues. The tract at residues 407-497 (TKNQNDQILP…RKLKQSGRKK (91 aa)) is disordered. Residues 454–475 (RAKETPEEKRARKKKTKEDKAE) are compositionally biased toward basic and acidic residues. Positions 476 to 497 (KRKSKIPKYEKKRKLKQSGRKK) are enriched in basic residues.

The protein belongs to the protein kinase superfamily. RIO-type Ser/Thr kinase family. Mg(2+) serves as cofactor.

The protein localises to the cytoplasm. The enzyme catalyses L-seryl-[protein] + ATP = O-phospho-L-seryl-[protein] + ADP + H(+). The catalysed reaction is L-threonyl-[protein] + ATP = O-phospho-L-threonyl-[protein] + ADP + H(+). It carries out the reaction ATP + H2O = ADP + phosphate + H(+). Functionally, required for the final endonucleolytic cleavage at site D converting 20S pre-rRNA into the mature 18S rRNA. Required for the final steps of cytoplasmic maturation of the 40S ribosomal subunit. Despite the protein kinase domain is proposed to act predominantly as an ATPase. In Schizosaccharomyces pombe (strain 972 / ATCC 24843) (Fission yeast), this protein is Serine/threonine-protein kinase rio1 (rio1).